Here is a 153-residue protein sequence, read N- to C-terminus: UPF0260 protein YcgN (153 aa).

Belongs to the UPF0260 family.

This Escherichia coli O6:K15:H31 (strain 536 / UPEC) protein is UPF0260 protein YcgN.